The chain runs to 403 residues: Phosphopentomutase (403 aa).

6 residues coordinate Mn(2+): D13, D298, H303, D339, H340, and H351.

It belongs to the phosphopentomutase family. Mn(2+) is required as a cofactor.

The protein resides in the cytoplasm. The enzyme catalyses 2-deoxy-alpha-D-ribose 1-phosphate = 2-deoxy-D-ribose 5-phosphate. It catalyses the reaction alpha-D-ribose 1-phosphate = D-ribose 5-phosphate. Its pathway is carbohydrate degradation; 2-deoxy-D-ribose 1-phosphate degradation; D-glyceraldehyde 3-phosphate and acetaldehyde from 2-deoxy-alpha-D-ribose 1-phosphate: step 1/2. Its function is as follows. Isomerase that catalyzes the conversion of deoxy-ribose 1-phosphate (dRib-1-P) and ribose 1-phosphate (Rib-1-P) to deoxy-ribose 5-phosphate (dRib-5-P) and ribose 5-phosphate (Rib-5-P), respectively. This is Phosphopentomutase from Streptococcus mutans serotype c (strain ATCC 700610 / UA159).